The sequence spans 460 residues: ATP synthase subunit beta (460 aa).

150 to 157 serves as a coordination point for ATP; that stretch reads GGAGVGKT.

The protein belongs to the ATPase alpha/beta chains family. In terms of assembly, F-type ATPases have 2 components, CF(1) - the catalytic core - and CF(0) - the membrane proton channel. CF(1) has five subunits: alpha(3), beta(3), gamma(1), delta(1), epsilon(1). CF(0) has three main subunits: a(1), b(2) and c(9-12). The alpha and beta chains form an alternating ring which encloses part of the gamma chain. CF(1) is attached to CF(0) by a central stalk formed by the gamma and epsilon chains, while a peripheral stalk is formed by the delta and b chains.

The protein localises to the cell inner membrane. The enzyme catalyses ATP + H2O + 4 H(+)(in) = ADP + phosphate + 5 H(+)(out). In terms of biological role, produces ATP from ADP in the presence of a proton gradient across the membrane. The catalytic sites are hosted primarily by the beta subunits. This is ATP synthase subunit beta from Proteus mirabilis (strain HI4320).